We begin with the raw amino-acid sequence, 466 residues long: Soluble pyridine nucleotide transhydrogenase (466 aa).

Residue 36–45 (ERYHNVGGGC) participates in FAD binding.

The protein belongs to the class-I pyridine nucleotide-disulfide oxidoreductase family. FAD serves as cofactor.

It localises to the cytoplasm. It catalyses the reaction NAD(+) + NADPH = NADH + NADP(+). In terms of biological role, conversion of NADPH, generated by peripheral catabolic pathways, to NADH, which can enter the respiratory chain for energy generation. This Salmonella gallinarum (strain 287/91 / NCTC 13346) protein is Soluble pyridine nucleotide transhydrogenase.